A 398-amino-acid chain; its full sequence is Phosphoglycerate kinase (398 aa).

Substrate contacts are provided by residues 22–24 (DFN), Arg38, 61–64 (HLGR), Arg120, and Arg153. Residues Lys204, Glu326, and 352 to 355 (GGDT) contribute to the ATP site.

It belongs to the phosphoglycerate kinase family. Monomer.

The protein localises to the cytoplasm. The enzyme catalyses (2R)-3-phosphoglycerate + ATP = (2R)-3-phospho-glyceroyl phosphate + ADP. The protein operates within carbohydrate degradation; glycolysis; pyruvate from D-glyceraldehyde 3-phosphate: step 2/5. This is Phosphoglycerate kinase from Geobacter metallireducens (strain ATCC 53774 / DSM 7210 / GS-15).